The sequence spans 259 residues: Glutamate racemase (259 aa).

Substrate is bound by residues 12–13 (DS) and 44–45 (YG). The active-site Proton donor/acceptor is Cys75. A substrate-binding site is contributed by 76–77 (NT). Cys186 functions as the Proton donor/acceptor in the catalytic mechanism. A substrate-binding site is contributed by 187 to 188 (TH).

This sequence belongs to the aspartate/glutamate racemases family.

It carries out the reaction L-glutamate = D-glutamate. Its pathway is cell wall biogenesis; peptidoglycan biosynthesis. Functionally, provides the (R)-glutamate required for cell wall biosynthesis. This Clostridium novyi (strain NT) protein is Glutamate racemase.